The following is a 690-amino-acid chain: Elongation factor G (690 aa).

Residues 8-283 (EYIRNIGICA…AVVGFLPSPI (276 aa)) enclose the tr-type G domain. Residues 17–24 (AHIDAGKT), 81–85 (DTPGH), and 135–138 (NKMD) each bind GTP.

The protein belongs to the TRAFAC class translation factor GTPase superfamily. Classic translation factor GTPase family. EF-G/EF-2 subfamily.

The protein resides in the cytoplasm. Functionally, catalyzes the GTP-dependent ribosomal translocation step during translation elongation. During this step, the ribosome changes from the pre-translocational (PRE) to the post-translocational (POST) state as the newly formed A-site-bound peptidyl-tRNA and P-site-bound deacylated tRNA move to the P and E sites, respectively. Catalyzes the coordinated movement of the two tRNA molecules, the mRNA and conformational changes in the ribosome. This chain is Elongation factor G, found in Rickettsia canadensis (strain McKiel).